Reading from the N-terminus, the 184-residue chain is Putative manganese efflux pump MntP (184 aa).

6 consecutive transmembrane segments (helical) span residues 12-32 (SIMAFALGMDAFSVGLGMGMI), 39-59 (IIYIGLVIGIFHMFMPLFGML), 63-83 (LLSGWLGLLATYIGGALLLVL), 99-119 (FIAPVGAGLVLFATSVSLDSF), 132-152 (VWMTILLFGFFSMILTWLGLL), and 164-184 (YSGALGGIILLAFGIKLLFPL).

This sequence belongs to the MntP (TC 9.B.29) family.

It is found in the cell membrane. Its function is as follows. Probably functions as a manganese efflux pump. The sequence is that of Putative manganese efflux pump MntP from Bacillus pumilus (strain SAFR-032).